We begin with the raw amino-acid sequence, 682 residues long: T-box brain protein 1 (682 aa).

Disordered regions lie at residues 43-83 and 108-127; these read TDNL…RSKL and SQSS…FPYP. Positions 58 to 68 are enriched in polar residues; that stretch reads GMTNQSDTDNF. Residues 108-122 show a composition bias toward low complexity; it reads SQSSQPQSAATAPSA. A DNA-binding region (T-box) is located at residues 213–393; sequence LWLKFHRHQT…HNPFAKGFRD (181 aa). Thr408 bears the Phosphothreonine mark. Ser410 bears the Phosphoserine mark. Disordered regions lie at residues 447–483 and 588–658; these read PGAG…SPQR and GLAA…KSEV. Residues 462 to 472 show a composition bias toward polar residues; the sequence is PHTNGLLSPQQ. The residue at position 594 (Ser594) is a Phosphoserine. Positions 619–629 are enriched in low complexity; the sequence is SSIKSIDSSDS. Phosphoserine is present on Ser641.

Homodimer. Part of a complex containing CASK, TBR1 and TSPYL2; may modulate gene expression in response to neuronal synaptic activity. Interacts with FOXP2. Interacts with FOXP1. Interacts with BCL11A. Brain.

It localises to the nucleus. In terms of biological role, transcriptional repressor involved in multiple aspects of cortical development, including neuronal migration, laminar and areal identity, and axonal projection. As transcriptional repressor of FEZF2, it blocks the formation of the corticospinal (CS) tract from layer 6 projection neurons, thereby restricting the origin of CS axons specifically to layer 5 neurons. In Homo sapiens (Human), this protein is T-box brain protein 1 (TBR1).